Reading from the N-terminus, the 198-residue chain is Peptidyl-tRNA hydrolase (198 aa).

Tyrosine 17 is a binding site for tRNA. Residue histidine 22 is the Proton acceptor of the active site. TRNA is bound by residues tyrosine 74, asparagine 76, and asparagine 122.

It belongs to the PTH family. In terms of assembly, monomer.

The protein localises to the cytoplasm. It carries out the reaction an N-acyl-L-alpha-aminoacyl-tRNA + H2O = an N-acyl-L-amino acid + a tRNA + H(+). Functionally, hydrolyzes ribosome-free peptidyl-tRNAs (with 1 or more amino acids incorporated), which drop off the ribosome during protein synthesis, or as a result of ribosome stalling. In terms of biological role, catalyzes the release of premature peptidyl moieties from peptidyl-tRNA molecules trapped in stalled 50S ribosomal subunits, and thus maintains levels of free tRNAs and 50S ribosomes. This Kineococcus radiotolerans (strain ATCC BAA-149 / DSM 14245 / SRS30216) protein is Peptidyl-tRNA hydrolase.